A 127-amino-acid chain; its full sequence is Fumarate reductase subunit C (127 aa).

The next 3 helical transmembrane spans lie at 30-50 (ATVL…GSLV), 67-87 (IVVA…QTFF), and 107-127 (IIVL…LIVM).

This sequence belongs to the FrdC family. In terms of assembly, part of an enzyme complex containing four subunits: a flavoprotein (FrdA), an iron-sulfur protein (FrdB), and two hydrophobic anchor proteins (FrdC and FrdD).

It localises to the cell inner membrane. In terms of biological role, anchors the catalytic components of the fumarate reductase complex to the cell membrane, binds quinones. The chain is Fumarate reductase subunit C from Vibrio campbellii (strain ATCC BAA-1116).